Consider the following 887-residue polypeptide: Alanine--tRNA ligase (887 aa).

Zn(2+) contacts are provided by H575, H579, C677, and H681.

The protein belongs to the class-II aminoacyl-tRNA synthetase family. The cofactor is Zn(2+).

It is found in the cytoplasm. It carries out the reaction tRNA(Ala) + L-alanine + ATP = L-alanyl-tRNA(Ala) + AMP + diphosphate. In terms of biological role, catalyzes the attachment of alanine to tRNA(Ala) in a two-step reaction: alanine is first activated by ATP to form Ala-AMP and then transferred to the acceptor end of tRNA(Ala). Also edits incorrectly charged Ser-tRNA(Ala) and Gly-tRNA(Ala) via its editing domain. The protein is Alanine--tRNA ligase of Geobacillus kaustophilus (strain HTA426).